The chain runs to 350 residues: MSTPPSLPATGVPAPHLPRGAAAPALPACLALAGPTASGKTAGALALARALAPHRPVEIVSVDSALVYRGMDIGTAKPTAAEQAAVPHHLIDIRDPLQPYSAAEFVADAQRLVREIQARGALPLLVGGTMLYFKALWDGIDDMPPADAAVRARLEAQAAAEGWPALHAELARVDPQTAARLAPGDSQRIQRALEVWHVSGRPLSSFHTRSRAAGEAAGAARMSMPLFSLEPQDRAWLHGRIAQRFDAMLDEGFVEEVRRLRARGDLHPDLPSMRCVGYRQAWEALYEEARTGRLPLAQLRERGIAATRQLAKRQVTWLRSMPWRHAIACDAPDATQRWVAAALHALGVPA.

G34–T41 contacts ATP. Position 36-41 (T36–T41) interacts with substrate. Interaction with substrate tRNA regions lie at residues D63–L66, Q187–R191, and R274–R279.

It belongs to the IPP transferase family. As to quaternary structure, monomer. It depends on Mg(2+) as a cofactor.

It catalyses the reaction adenosine(37) in tRNA + dimethylallyl diphosphate = N(6)-dimethylallyladenosine(37) in tRNA + diphosphate. Catalyzes the transfer of a dimethylallyl group onto the adenine at position 37 in tRNAs that read codons beginning with uridine, leading to the formation of N6-(dimethylallyl)adenosine (i(6)A). This is tRNA dimethylallyltransferase from Paracidovorax citrulli (strain AAC00-1) (Acidovorax citrulli).